The sequence spans 597 residues: Aspartate--tRNA(Asp/Asn) ligase (597 aa).

Glutamate 176 is a binding site for L-aspartate. An aspartate region spans residues 200 to 203 (QQFK). Positions 222 and 451 each coordinate L-aspartate. 222–224 (RDE) lines the ATP pocket. Residue glutamate 489 coordinates ATP. Residue arginine 496 coordinates L-aspartate. 541 to 544 (GIDR) contacts ATP.

The protein belongs to the class-II aminoacyl-tRNA synthetase family. Type 1 subfamily. In terms of assembly, homodimer.

The protein localises to the cytoplasm. It carries out the reaction tRNA(Asx) + L-aspartate + ATP = L-aspartyl-tRNA(Asx) + AMP + diphosphate. Functionally, aspartyl-tRNA synthetase with relaxed tRNA specificity since it is able to aspartylate not only its cognate tRNA(Asp) but also tRNA(Asn). Reaction proceeds in two steps: L-aspartate is first activated by ATP to form Asp-AMP and then transferred to the acceptor end of tRNA(Asp/Asn). This Orientia tsutsugamushi (strain Boryong) (Rickettsia tsutsugamushi) protein is Aspartate--tRNA(Asp/Asn) ligase.